The sequence spans 517 residues: MLSPIEAIVGLVTFTFLFYFLWTKKSQKPSKPLPPKIPGGWPVIGHLFHFNDDGDDRPLARKLGDLADKYGPVFTFRLGLPLVLVVSSYEAVKDCFSTNDAIFSNRPAFLYGDYLGYNNAMLFLANYGPYWRKNRKLVIQEVLSASRLEKFKHVRFARIQASIKNLYTRIDGNSSTINLTDWLEELNFGLIVKMIAGKNYESGKGDEQVERFKKAFKDFMILSMEFVLWDAFPIPLFKWVDFQGHVKAMKRTFKDIDSVFQNWLEEHINKREKMEVNAEGNEQDFIDVVLSKMSNEYLGEGYSRDTVIKATVFSLVLDAADTVALHINWGMALLINNQKALTKAQEEIDTKVGKDRWVEESDIKDLVYLQAIVKEVLRLYPPGPLLVPHENVEDCVVSGYHIPKGTRLFANVMKLQRDPKLWSDPDTFDPERFIATDIDFRGQYYKYIPFGSGRRSCPGMTYALQVEHLTMAHLIQGFNYRTPNDEPLDMKEGAGITIRKVNPVELIIAPRLAPELY.

The helical transmembrane segment at 2–22 (LSPIEAIVGLVTFTFLFYFLW) threads the bilayer. Residue Lys254 forms a Glycyl lysine isopeptide (Lys-Gly) (interchain with G-Cter in ubiquitin) linkage. Residue Cys457 coordinates heme.

It belongs to the cytochrome P450 family. CYP82E2 subfamily. Heme is required as a cofactor. As to expression, expressed in leaves.

It localises to the membrane. The catalysed reaction is (S)-nicotine + reduced [NADPH--hemoprotein reductase] + O2 = (S)-nornicotine + formaldehyde + oxidized [NADPH--hemoprotein reductase] + H2O + H(+). Its pathway is alkaloid biosynthesis; nicotine biosynthesis. Its function is as follows. Involved in the biosynthesis of pyridine alkaloid natural products, leading mainly to the production of anabasine, anatabine, nicotine and nornicotine, effective deterrents against herbivores with antiparasitic and pesticide properties (neurotoxins); nornicotine serves as the precursor in the synthesis of the carcinogen compound N'-nitrosonornicotine (NNN). Catalyzes the demethylation of nicotine to form nornicotine. In Nicotiana tomentosiformis (Tobacco), this protein is Nicotine N-demethylase CYP82E4.